A 204-amino-acid polypeptide reads, in one-letter code: Probable calcium-binding protein CML46 (204 aa).

EF-hand domains are found at residues 72 to 106 (LEFQ…LGLS), 132 to 167 (PSLE…LGLK), and 170 to 204 (SNLE…NNFC). 4 residues coordinate Ca(2+): aspartate 145, asparagine 147, aspartate 149, and aspartate 156.

Potential calcium sensor. This chain is Probable calcium-binding protein CML46, found in Arabidopsis thaliana (Mouse-ear cress).